A 212-amino-acid chain; its full sequence is Ribosomal RNA small subunit methyltransferase G (212 aa).

Residues Gly80, Leu85, 131-132 (VE), and Arg146 each bind S-adenosyl-L-methionine.

This sequence belongs to the methyltransferase superfamily. RNA methyltransferase RsmG family.

The protein resides in the cytoplasm. It catalyses the reaction guanosine(527) in 16S rRNA + S-adenosyl-L-methionine = N(7)-methylguanosine(527) in 16S rRNA + S-adenosyl-L-homocysteine. Specifically methylates the N7 position of guanine in position 527 of 16S rRNA. This chain is Ribosomal RNA small subunit methyltransferase G, found in Azoarcus sp. (strain BH72).